A 603-amino-acid polypeptide reads, in one-letter code: ADP-ribosylation factor-binding protein GGA2 (603 aa).

Residues 1-22 (MAATAVAAGTGSPAGTESAEGG) are disordered. Residues 13–22 (PAGTESAEGG) show a composition bias toward low complexity. The VHS domain occupies 36 to 166 (ATDPSMAEQD…MLKKQGIIKQ (131 aa)). Residues 190 to 317 (DEEKSKLLTR…GVRLYKQVVE (128 aa)) form the GAT domain. The tract at residues 318–473 (GRVSAGNAVP…VFVPLESVKP (156 aa)) is unstructured hinge. In terms of domain architecture, GAE spans 474 to 595 (SSLPPIVVYD…SEVGEVKDFP (122 aa)).

This sequence belongs to the GGA protein family. Monomer. Interacts with NECAP1, TSG101, UBC and AFTPH/aftiphilin. Interacts with CNST. Interacts with GGA1 and GGA3. Binds to clathrin and activated ARFs, such as ARF1, ARF5 and ARF6. Binds RABEP1 and RABGEF1. Interacts with the type-I membrane proteins LRP3, M6PR/CD-MPR, IGF2R/CI-MPR and BACE1. Interacts (via N-terminal VHS domain) with SORL1/sorLA and SORT1 (via C-terminal cytosolic domain). Binds the accessory proteins CCDC91, P200, SYNRG, EPN4 and NECAP2. Interacts with ADRA2B. Interacts (via VHS domain) with PIK4B; the interaction is important for PIK4B location at the Golgi apparatus membrane. Ubiquitinated.

Its subcellular location is the golgi apparatus. It localises to the trans-Golgi network membrane. It is found in the endosome membrane. The protein resides in the early endosome membrane. In terms of biological role, plays a role in protein sorting and trafficking between the trans-Golgi network (TGN) and endosomes. Mediates the ARF-dependent recruitment of clathrin to the TGN and binds ubiquitinated proteins and membrane cargo molecules with a cytosolic acidic cluster-dileucine (DXXLL) motif. Mediates export of the GPCR receptor ADRA2B to the cell surface. Regulates retrograde transport of phosphorylated form of BACE1 from endosomes to the trans-Golgi network. This Mus musculus (Mouse) protein is ADP-ribosylation factor-binding protein GGA2 (Gga2).